Here is a 581-residue protein sequence, read N- to C-terminus: Arginine--tRNA ligase (581 aa).

The 'HIGH' region motif lies at 123 to 133; sequence PNVAKEMHVGH.

The protein belongs to the class-I aminoacyl-tRNA synthetase family. As to quaternary structure, monomer.

It is found in the cytoplasm. It catalyses the reaction tRNA(Arg) + L-arginine + ATP = L-arginyl-tRNA(Arg) + AMP + diphosphate. This Blochmanniella pennsylvanica (strain BPEN) protein is Arginine--tRNA ligase.